A 606-amino-acid polypeptide reads, in one-letter code: NADH-ubiquinone oxidoreductase chain 5 (606 aa).

Transmembrane regions (helical) follow at residues 3 to 23, 35 to 55, 87 to 107, 117 to 137, 140 to 160, 171 to 191, 211 to 233, 241 to 261, 273 to 293, 301 to 320, 325 to 347, 366 to 386, 402 to 422, 457 to 477, 488 to 508, and 582 to 602; these read LFTS…LMSL, YVKT…LIFI, MIFT…SMWY, FFKY…ANNL, LFIG…WWYG, AILY…WFLF, LPLL…HPWL, TPVS…FLLI, MQTL…ICAL, IIAF…IGIN, AFLH…GSII, LPFT…TPFL, SYTN…TAVY, LLIG…PMTI, LTAL…SLMT, and GLIK…MLLF.

The protein belongs to the complex I subunit 5 family. Core subunit of respiratory chain NADH dehydrogenase (Complex I) which is composed of 45 different subunits.

It localises to the mitochondrion inner membrane. It catalyses the reaction a ubiquinone + NADH + 5 H(+)(in) = a ubiquinol + NAD(+) + 4 H(+)(out). Core subunit of the mitochondrial membrane respiratory chain NADH dehydrogenase (Complex I) which catalyzes electron transfer from NADH through the respiratory chain, using ubiquinone as an electron acceptor. Essential for the catalytic activity and assembly of complex I. The chain is NADH-ubiquinone oxidoreductase chain 5 (MT-ND5) from Pseudosoriculus fumidus (Taiwanese brown-toothed shrew).